The primary structure comprises 340 residues: Phenylalanine--tRNA ligase alpha subunit (340 aa).

Position 254 (glutamate 254) interacts with Mg(2+).

Belongs to the class-II aminoacyl-tRNA synthetase family. Phe-tRNA synthetase alpha subunit type 1 subfamily. As to quaternary structure, tetramer of two alpha and two beta subunits. Mg(2+) serves as cofactor.

Its subcellular location is the cytoplasm. It catalyses the reaction tRNA(Phe) + L-phenylalanine + ATP = L-phenylalanyl-tRNA(Phe) + AMP + diphosphate + H(+). This Chloroherpeton thalassium (strain ATCC 35110 / GB-78) protein is Phenylalanine--tRNA ligase alpha subunit.